A 513-amino-acid polypeptide reads, in one-letter code: GMP synthase [glutamine-hydrolyzing] (513 aa).

A Glutamine amidotransferase type-1 domain is found at 9–198 (LILVLDFGSQ…VRRVCNCTGE (190 aa)). The active-site Nucleophile is the cysteine 86. Active-site residues include histidine 172 and glutamate 174. The 190-residue stretch at 199-388 (WTMENFIEIE…LGIPEHLVWR (190 aa)) folds into the GMPS ATP-PPase domain. 226–232 (SGGVDSS) lines the ATP pocket.

In terms of assembly, homodimer.

The enzyme catalyses XMP + L-glutamine + ATP + H2O = GMP + L-glutamate + AMP + diphosphate + 2 H(+). The protein operates within purine metabolism; GMP biosynthesis; GMP from XMP (L-Gln route): step 1/1. Catalyzes the synthesis of GMP from XMP. This chain is GMP synthase [glutamine-hydrolyzing], found in Staphylococcus epidermidis (strain ATCC 35984 / DSM 28319 / BCRC 17069 / CCUG 31568 / BM 3577 / RP62A).